Here is a 195-residue protein sequence, read N- to C-terminus: Imidazoleglycerol-phosphate dehydratase (195 aa).

It belongs to the imidazoleglycerol-phosphate dehydratase family.

It is found in the cytoplasm. The enzyme catalyses D-erythro-1-(imidazol-4-yl)glycerol 3-phosphate = 3-(imidazol-4-yl)-2-oxopropyl phosphate + H2O. It functions in the pathway amino-acid biosynthesis; L-histidine biosynthesis; L-histidine from 5-phospho-alpha-D-ribose 1-diphosphate: step 6/9. This is Imidazoleglycerol-phosphate dehydratase from Ruegeria sp. (strain TM1040) (Silicibacter sp.).